Consider the following 266-residue polypeptide: Pyrrolizixenacetamide deacetylase (266 aa).

T28 provides a ligand contact to acetate. Catalysis depends on S94, which acts as the Nucleophile. An acetate-binding site is contributed by L95. Residues D215 and H242 each act as charge relay system in the active site. Residue H242 participates in acetate binding.

The protein belongs to the AB hydrolase superfamily. Homodimer.

The enzyme catalyses pyrrolizixenacetamide + H2O = 3-amino-5,6,7,7a-tetrahydro-1H-pyrrolizin-1-one + acetate + H(+). Functionally, involved in the biosynthetic pathway of pyrrolizwilline, a pyrrolizidine alkaloid. Catalyzes the N-deacetylation of pyrrolizixenacetamide. The sequence is that of Pyrrolizixenacetamide deacetylase from Xenorhabdus hominickii.